The following is a 308-amino-acid chain: Palmitoyltransferase ZDHHC7 (308 aa).

The Cytoplasmic segment spans residues 1-50 (MQPSGHRLRDIEHHPLLTDNDNYDSASSSSSEADMADRVWFIRDGCGMVC). The chain crosses the membrane as a helical span at residues 51–71 (AVMTWLLVVYADFVVTFVMLL). The Lumenal segment spans residues 72–75 (PSKD). Residues 76–96 (FWYSVVNGVLFNCLAVLALSS) form a helical membrane-spanning segment. Over 97 to 173 (HLRTMLTDPG…NNCVGEKNQR (77 aa)) the chain is Cytoplasmic. Positions 130–180 (YKCPKCCCIKPERAHHCSICKRCIRKMDHHCPWVNNCVGEKNQRFFVLFTM) constitute a DHHC domain. The active-site S-palmitoyl cysteine intermediate is the Cys-160. Residues 174 to 194 (FFVLFTMYIALSSIHALILCG) form a helical membrane-spanning segment. Over 195 to 217 (LQFISCVRGQWTECSDFSPPITV) the chain is Lumenal. The chain crosses the membrane as a helical span at residues 218 to 238 (ILLVFLCLEGLLFFTFTAVMF). The Cytoplasmic segment spans residues 239–308 (GTQIHSICND…TRKGGPEFSV (70 aa)).

The protein belongs to the DHHC palmitoyltransferase family. Homooligomers. Heterooligomers with ZDHHC3. Post-translationally, autopalmitoylated. In terms of tissue distribution, widely expressed. Present in Sertoli cells (at protein level).

It localises to the golgi apparatus membrane. It catalyses the reaction L-cysteinyl-[protein] + hexadecanoyl-CoA = S-hexadecanoyl-L-cysteinyl-[protein] + CoA. The catalysed reaction is L-cysteinyl-[protein] + tetradecanoyl-CoA = S-tetradecanoyl-L-cysteinyl-[protein] + CoA. It carries out the reaction L-cysteinyl-[protein] + octadecanoyl-CoA = S-octadecanoyl-L-cysteinyl-[protein] + CoA. In terms of biological role, golgi-localized palmitoyltransferase that catalyzes the addition of palmitate onto various protein substrates and therefore functions in several unrelated biological processes. Has no stringent fatty acid selectivity and in addition to palmitate can also transfer onto target proteins myristate from tetradecanoyl-CoA and stearate from octadecanoyl-CoA. Palmitoylates sex steroid hormone receptors, including ESR1, PGR and AR, thereby regulating their targeting to the plasma membrane and their function in rapid intracellular signaling upon binding of sex hormones. Palmitoylates GNAQ, a heterotrimeric G protein, regulating its dynamic localization at the plasma membrane and is thereby involved in GNAQ-dependent G protein-coupled receptor signaling pathways. Also functions in ligand-induced cell death by regulating the FAS signaling pathway through the palmitoylation and stabilization of the receptor at the plasma membrane. In epithelial cells, palmitoylates SCRIB and regulates its localization to the plasma membrane, regulating indirectly cell polarity and differentiation. Also palmitoylates JAM3 and promotes its expression at tight junctions and regulates its function in cell migration. Palmitoylates the glucose transporter GLUT4/SLC2A4 and controls the insulin-dependent translocation of GLUT4 to the plasma membrane. In brain, could also palmitoylate SNAP25 and DLG4/PSD95. Could also palmitoylate DNAJC5 and regulate its localization to the Golgi membrane. Could also palmitoylate NCDN. May play a role in follicle stimulation hormone (FSH) activation of testicular Sertoli cells. Activates pyroptosis by catalyzing palmitoylation of gasdermin-D (GSDMD). The chain is Palmitoyltransferase ZDHHC7 from Rattus norvegicus (Rat).